A 277-amino-acid chain; its full sequence is Nickel transport system permease protein NikC (277 aa).

Residues 1–12 (MNFFLSSRWSVR) are Cytoplasmic-facing. The chain crosses the membrane as a helical span at residues 13–33 (LALIIIALLALIALTSQWWLP). The Periplasmic portion of the chain corresponds to 34 to 78 (YDPQAIDLPSRLLSPDAQHWLGTDHLGRDIFSRLMAATRVSLGSV). In terms of domain architecture, ABC transmembrane type-1 spans 67-260 (LMAATRVSLG…ISVMAFNLVG (194 aa)). Residues 79 to 99 (MACLLLVLTLGLVIGGSAGLI) form a helical membrane-spanning segment. Over 100 to 120 (GGRVDQATMRVADMFMTFPTS) the chain is Cytoplasmic. A helical membrane pass occupies residues 121-141 (ILSFFMVGVLGTGLTNVIIAI). Topologically, residues 142–183 (ALSHWAWYARMVRSLVISLRQREFVLASRLSGAGHVRVFVDH) are periplasmic. Residues 184 to 204 (LAGAVIPSLLVLATLDIGHMM) form a helical membrane-spanning segment. The Cytoplasmic segment spans residues 205-207 (LHV). A helical transmembrane segment spans residues 208–228 (AGMSFLGLGVTAPTAEWGVMI). Over 229–239 (NDARQYIWTQP) the chain is Periplasmic. A helical membrane pass occupies residues 240–260 (LQMFWPGLALFISVMAFNLVG). The Cytoplasmic segment spans residues 261-277 (DALRDHLDPHLVTEHAH).

This sequence belongs to the binding-protein-dependent transport system permease family. OppBC subfamily. As to quaternary structure, probably forms a heterodimeric pore with NikB.

It localises to the cell inner membrane. Involved in a nickel transport system, probably translocates nickel through the bacterial inner membrane. This chain is Nickel transport system permease protein NikC (nikC), found in Escherichia coli O157:H7.